A 257-amino-acid chain; its full sequence is BTB/POZ domain-containing protein KCTD1 (257 aa).

The interval 1-25 is disordered; that stretch reads MSRPLITRSPASPLNNQGIPTPAQL. Ser9 and Ser12 each carry phosphoserine. The span at 9–25 shows a compositional bias: polar residues; the sequence is SPASPLNNQGIPTPAQL. Residues 30 to 100 form the BTB domain; sequence APVHIDVGGH…LRTSKLLIPD (71 aa).

As to quaternary structure, forms homopentamers. Interacts with KCTD15, probably forming heteropentamers depending on its abundance in a cell-type dependent manner. Interacts with TFAP2A, TFAP2B and TFAP2C via the BTB domain. Post-translationally, sumoylated. As to expression, expressed in mammary gland, kidney, brain and ovary.

It is found in the nucleus. In terms of biological role, may repress the transcriptional activity of AP-2 family members, including TFAP2A, TFAP2B and TFAP2C to various extent. The protein is BTB/POZ domain-containing protein KCTD1 (KCTD1) of Homo sapiens (Human).